We begin with the raw amino-acid sequence, 515 residues long: Anthranilate synthase component 1 (515 aa).

Residues Thr40 and 291-293 each bind L-tryptophan; that span reads PYM. Residue 328 to 329 coordinates chorismate; the sequence is GT. Residue Glu361 participates in Mg(2+) binding. Residues Tyr449, Arg469, 483-485, and Gly485 each bind chorismate; that span reads GAG. Glu498 serves as a coordination point for Mg(2+).

It belongs to the anthranilate synthase component I family. Heterotetramer consisting of two non-identical subunits: a beta subunit (TrpG) and a large alpha subunit (TrpE). Mg(2+) serves as cofactor.

The catalysed reaction is chorismate + L-glutamine = anthranilate + pyruvate + L-glutamate + H(+). The protein operates within amino-acid biosynthesis; L-tryptophan biosynthesis; L-tryptophan from chorismate: step 1/5. Its activity is regulated as follows. Feedback inhibited by tryptophan. Its function is as follows. Part of a heterotetrameric complex that catalyzes the two-step biosynthesis of anthranilate, an intermediate in the biosynthesis of L-tryptophan. In the first step, the glutamine-binding beta subunit (TrpG) of anthranilate synthase (AS) provides the glutamine amidotransferase activity which generates ammonia as a substrate that, along with chorismate, is used in the second step, catalyzed by the large alpha subunit of AS (TrpE) to produce anthranilate. In the absence of TrpG, TrpE can synthesize anthranilate directly from chorismate and high concentrations of ammonia. The sequence is that of Anthranilate synthase component 1 (trpE) from Buchnera aphidicola subsp. Schizaphis graminum (strain Sg).